Here is a 411-residue protein sequence, read N- to C-terminus: Z-DNA-binding protein 1 (411 aa).

Z-binding domains are found at residues 8–70 (LSTG…SIGG) and 84–148 (SSAQ…HSRQ). Residues Lys-17 and Lys-43 each participate in a glycyl lysine isopeptide (Lys-Gly) (interchain with G-Cter in ubiquitin) cross-link. The tract at residues 60-86 (SPEPATWSIGGAASGDGAPAIPENSSA) is disordered. 2 consecutive short sequence motifs (RIP homotypic interaction motif (RHIM)) follow at residues 188–205 (NSNAIQIGHGNVIVREKA) and 237–261 (YIYMDKSLLQQVQLGHHNEMSLVGD). Disordered regions lie at residues 263–303 (GKHP…EGDT) and 332–411 (KGEV…LSKQ). 3 stretches are compositionally biased toward polar residues: residues 268–292 (YSFSDSPPEVSTTTADPGASFNMQT), 350–371 (GTSSEATPPRSCQHTPSDSMLP), and 400–411 (IESSQDTGLSKQ).

Homodimer. Interacts (via RIP homotypic interaction motif) with RIPK3; leading to RIPK3 activation and necroptosis; interaction is enhanced by CASP6. Interacts (via RIP homotypic interaction motif) with RIPK1. Component of the AIM2 PANoptosome complex, a multiprotein complex that drives inflammatory cell death (PANoptosis). In terms of assembly, (Microbial infection) Interacts (via RIP homotypic interaction motif) with murid herpesvirus protein RIR1 (via RIP homotypic interaction motif); leading to inhibition of ZBP1-dependent necroptosis. As to quaternary structure, (Microbial infection) Interacts with vaccinia virus E3 protein; leading to inhibit ZBP1-dependent necroptosis. Ubiquitinated; polyubiquitinated following influenza A virus (IAV) infection. Post-translationally, phosphorylated. In terms of tissue distribution, expressed in lung, spleen and liver. Lower levels were seen in heart, kidney and testis. Expression is greatly up-regulated in tumor stromal cells and activated macrophages.

The protein resides in the cytoplasm. It localises to the nucleus. ZBP1-dependent necroptosis is normally inhibited by RIPK1: RIPK1 inhibits the ZBP1-induced activation of RIPK3 via FADD-mediated recruitment of CASP8, which cleaves RIPK1 and limits TNF-induced necroptosis. Functionally, key innate sensor that recognizes and binds Z-RNA structures, which are produced by a number of viruses, such as herpesvirus, orthomyxovirus or flavivirus, and triggers different forms of cell death. ZBP1 acts as an essential mediator of pyroptosis, necroptosis and apoptosis (PANoptosis), an integral part of host defense against pathogens, by activating RIPK3, caspase-8 (CASP8), and the NLRP3 inflammasome. Key activator of necroptosis, a programmed cell death process in response to death-inducing TNF-alpha family members, via its ability to bind Z-RNA: once activated upon Z-RNA-binding, ZBP1 interacts and stimulates RIPK3 kinase, which phosphorylates and activates MLKL, triggering execution of programmed necrosis. In addition to TNF-induced necroptosis, necroptosis can also take place in the nucleus in response to orthomyxoviruses infection: ZBP1 recognizes and binds Z-RNA structures that are produced in infected nuclei by orthomyxoviruses, such as the influenza A virus (IAV), leading to ZBP1 activation, RIPK3 stimulation and subsequent MLKL phosphorylation, triggering disruption of the nuclear envelope and leakage of cellular DNA into the cytosol. ZBP1-dependent cell death in response to IAV infection promotes interleukin-1 alpha (IL1A) induction in an NLRP3-inflammasome-independent manner: IL1A expression is required for the optimal interleukin-1 beta (IL1B) production, and together, these cytokines promote infiltration of inflammatory neutrophils to the lung, leading to the formation of neutrophil extracellular traps. In addition to its direct role in driving necroptosis via its ability to sense Z-RNAs, also involved in PANoptosis triggered in response to bacterial infection: component of the AIM2 PANoptosome complex, a multiprotein complex that triggers PANoptosis. Also acts as the apical sensor of fungal infection responsible for activating PANoptosis. Involved in CASP8-mediated cell death via its interaction with RIPK1 but independently of its ability to sense Z-RNAs. In some cell types, also able to restrict viral replication by promoting cell death-independent responses. In response to flavivirus infection in neurons, promotes a cell death-independent pathway that restricts viral replication: together with RIPK3, promotes a death-independent transcriptional program that modifies the cellular metabolism via up-regulation expression of the enzyme ACOD1/IRG1 and production of the metabolite itaconate. Itaconate inhibits the activity of succinate dehydrogenase, generating a metabolic state in neurons that suppresses replication of viral genomes. The protein is Z-DNA-binding protein 1 of Mus musculus (Mouse).